The following is a 56-amino-acid chain: Serine protease inhibitor Kazal-type 1 (56 aa).

A Kazal-like domain is found at L3 to C56. 3 disulfide bridges follow: C9-C38, C16-C35, and C24-C56.

It is found in the secreted. Functionally, serine protease inhibitor which exhibits anti-trypsin activity. In the pancreas, protects against trypsin-catalyzed premature activation of zymogens. In terms of biological role, in the male reproductive tract, binds to sperm heads where it modulates sperm capacitance by inhibiting calcium uptake and nitrogen oxide (NO) production. The sequence is that of Serine protease inhibitor Kazal-type 1 (SPINK1) from Equus caballus (Horse).